A 226-amino-acid polypeptide reads, in one-letter code: Adenosine 5'-phosphosulfate reductase (226 aa).

[4Fe-4S] cluster contacts are provided by C112, C113, C195, and C198. The active-site Nucleophile; cysteine thiosulfonate intermediate is the C221.

This sequence belongs to the PAPS reductase family. CysH subfamily. [4Fe-4S] cluster is required as a cofactor.

It localises to the cytoplasm. The catalysed reaction is [thioredoxin]-disulfide + sulfite + AMP + 2 H(+) = adenosine 5'-phosphosulfate + [thioredoxin]-dithiol. Its pathway is sulfur metabolism; hydrogen sulfide biosynthesis; sulfite from sulfate. Catalyzes the formation of sulfite from adenosine 5'-phosphosulfate (APS) using thioredoxin as an electron donor. The polypeptide is Adenosine 5'-phosphosulfate reductase (Bacillus anthracis (strain A0248)).